The chain runs to 125 residues: MKYQGKSTRKATGGRLRLNRSKRKFELGRDFTIPVIGAQKLKVLNVTGNGSKVRVLKSDVVNVTDPKTGKTQKVKMTTVTENPANKNYVRRNFLTKGTFVTTELGKARITNRPGQDGCINAVLVA.

It belongs to the eukaryotic ribosomal protein eS8 family. In terms of assembly, part of the 30S ribosomal subunit.

The sequence is that of Small ribosomal subunit protein eS8 from Methanocella arvoryzae (strain DSM 22066 / NBRC 105507 / MRE50).